The sequence spans 324 residues: Glutathione synthetase (324 aa).

The region spanning 124–309 is the ATP-grasp domain; sequence KLAIAQFREF…VAGMFIDALE (186 aa). 150–206 is a binding site for ATP; it reads HAEQGDVIFKPLDGMGGAGIFRVGADGMNLGSVIETLTHNGTRTVMAQQYIPAIRDG. 2 residues coordinate Mg(2+): Glu280 and Asn282.

The protein belongs to the prokaryotic GSH synthase family. It depends on Mg(2+) as a cofactor. Mn(2+) serves as cofactor.

The catalysed reaction is gamma-L-glutamyl-L-cysteine + glycine + ATP = glutathione + ADP + phosphate + H(+). It participates in sulfur metabolism; glutathione biosynthesis; glutathione from L-cysteine and L-glutamate: step 2/2. The protein is Glutathione synthetase of Ralstonia nicotianae (strain ATCC BAA-1114 / GMI1000) (Ralstonia solanacearum).